A 56-amino-acid polypeptide reads, in one-letter code: MDKKLLNIIACPICNKKLNFDLIRKELICEFDSVAFPIKDGIPILLRDSSYPIKKR.

Belongs to the UPF0434 family.

The chain is UPF0434 protein WIGBR2520 from Wigglesworthia glossinidia brevipalpis.